Reading from the N-terminus, the 75-residue chain is uncharacterized protein (75 aa).

This is an uncharacterized protein from Treponema pallidum (strain Nichols).